Consider the following 94-residue polypeptide: Co-chaperonin GroES (94 aa).

Belongs to the GroES chaperonin family. Heptamer of 7 subunits arranged in a ring. Interacts with the chaperonin GroEL.

The protein localises to the cytoplasm. In terms of biological role, together with the chaperonin GroEL, plays an essential role in assisting protein folding. The GroEL-GroES system forms a nano-cage that allows encapsulation of the non-native substrate proteins and provides a physical environment optimized to promote and accelerate protein folding. GroES binds to the apical surface of the GroEL ring, thereby capping the opening of the GroEL channel. The polypeptide is Co-chaperonin GroES (Bacillus pumilus (strain SAFR-032)).